Reading from the N-terminus, the 121-residue chain is MPISQAFTRQHRLLTGPQYQTVFDQPEWKVGLGGYLLLVTRNSQPHPRLGLVIGRKRVKRAVDRARIKRRVREQFRCRQQELAGLDIILLVRGRIENPNPNQVTLDITRLFDKLLAKCRQA.

This sequence belongs to the RnpA family. Consists of a catalytic RNA component (M1 or rnpB) and a protein subunit.

It carries out the reaction Endonucleolytic cleavage of RNA, removing 5'-extranucleotides from tRNA precursor.. In terms of biological role, RNaseP catalyzes the removal of the 5'-leader sequence from pre-tRNA to produce the mature 5'-terminus. It can also cleave other RNA substrates such as 4.5S RNA. The protein component plays an auxiliary but essential role in vivo by binding to the 5'-leader sequence and broadening the substrate specificity of the ribozyme. The chain is Ribonuclease P protein component from Alcanivorax borkumensis (strain ATCC 700651 / DSM 11573 / NCIMB 13689 / SK2).